Consider the following 331-residue polypeptide: Isopenicillin N synthase (331 aa).

4 residues coordinate isopenicillin N: R87, Y91, S183, and Y189. R87, Y91, S183, Y189, H214, and D216 together coordinate N-[(5S)-5-amino-5-carboxypentanoyl]-L-cysteinyl-D-valine. Residues 176 to 288 enclose the Fe2OG dioxygenase domain; that stretch reads KKEDALSSVV…RQSLPFFVNL (113 aa). Positions 214, 216, and 270 each coordinate Fe(2+). R279 is a 2-oxoglutarate binding site. Isopenicillin N is bound at residue S281. Residue S281 participates in N-[(5S)-5-amino-5-carboxypentanoyl]-L-cysteinyl-D-valine binding.

This sequence belongs to the iron/ascorbate-dependent oxidoreductase family. Monomer. Requires Fe(2+) as cofactor.

It localises to the cytoplasm. Its subcellular location is the cytosol. The catalysed reaction is N-[(5S)-5-amino-5-carboxypentanoyl]-L-cysteinyl-D-valine + O2 = isopenicillin N + 2 H2O. The protein operates within antibiotic biosynthesis; penicillin G biosynthesis; penicillin G from L-alpha-aminoadipate and L-cysteine and L-valine: step 2/3. Isopenicillin N synthase; part of the gene cluster that mediates the biosynthesis of penicillin, the world's most important antibiotic. IpnA catalyzes the cyclization of the tripeptide N-[(5S)-5-amino-5-carboxypentanoyl]-L-cysteinyl-D-valine (LLD-ACV or ACV) to form isopenicillin N (IPN) that contains the beta-lactam nucleus. The penicillin biosynthesis occurs via 3 enzymatic steps, the first corresponding to the production of the tripeptide N-[(5S)-5-amino-5-carboxypentanoyl]-L-cysteinyl-D-valine (LLD-ACV or ACV) by the NRPS acvA. The tripeptide ACV is then cyclized to isopenicillin N (IPN) by the isopenicillin N synthase ipnA that forms the beta-lactam nucleus. Finally, the alpha-aminoadipyl side chain is exchanged for phenylacetic acid by the isopenicillin N acyltransferase aatA to yield penicillin in the peroxisomal matrix. This chain is Isopenicillin N synthase, found in Penicillium chrysogenum (Penicillium notatum).